Reading from the N-terminus, the 331-residue chain is Ketol-acid reductoisomerase (NADP(+)) (331 aa).

Residues 2–181 form the KARI N-terminal Rossmann domain; it reads IKKYYESDAD…GATRAVVFET (180 aa). NADP(+) is bound by residues 25 to 28, Arg-48, Ser-52, and 82 to 85; these read YGSQ and DESQ. The active site involves His-107. Gly-133 lines the NADP(+) pocket. Positions 182–327 constitute a KARI C-terminal knotted domain; it reads TFREETETDL…AEIRGLMPQF (146 aa). 4 residues coordinate Mg(2+): Asp-190, Glu-194, Glu-226, and Glu-230. Ser-251 contacts substrate.

This sequence belongs to the ketol-acid reductoisomerase family. Mg(2+) serves as cofactor.

It carries out the reaction (2R)-2,3-dihydroxy-3-methylbutanoate + NADP(+) = (2S)-2-acetolactate + NADPH + H(+). The catalysed reaction is (2R,3R)-2,3-dihydroxy-3-methylpentanoate + NADP(+) = (S)-2-ethyl-2-hydroxy-3-oxobutanoate + NADPH + H(+). It participates in amino-acid biosynthesis; L-isoleucine biosynthesis; L-isoleucine from 2-oxobutanoate: step 2/4. Its pathway is amino-acid biosynthesis; L-valine biosynthesis; L-valine from pyruvate: step 2/4. Involved in the biosynthesis of branched-chain amino acids (BCAA). Catalyzes an alkyl-migration followed by a ketol-acid reduction of (S)-2-acetolactate (S2AL) to yield (R)-2,3-dihydroxy-isovalerate. In the isomerase reaction, S2AL is rearranged via a Mg-dependent methyl migration to produce 3-hydroxy-3-methyl-2-ketobutyrate (HMKB). In the reductase reaction, this 2-ketoacid undergoes a metal-dependent reduction by NADPH to yield (R)-2,3-dihydroxy-isovalerate. This chain is Ketol-acid reductoisomerase (NADP(+)), found in Methanosphaerula palustris (strain ATCC BAA-1556 / DSM 19958 / E1-9c).